Reading from the N-terminus, the 501-residue chain is Lycopene beta cyclase, chloroplastic (501 aa).

Residues 1 to 48 (MDTLLKTPNKLDFFIPQFHGFERLCSNNPYHSRVRLGVKKRAIKIVSS) constitute a chloroplast transit peptide. N-acetylvaline is present on valine 49. 85-113 (LAIVGGGPAGLAVAQQVSEAGLSVCSIDP) provides a ligand contact to NAD(+).

This sequence belongs to the lycopene cyclase family.

The protein resides in the plastid. It is found in the chloroplast. It carries out the reaction a carotenoid psi-end group = a carotenoid beta-end derivative. It participates in carotenoid biosynthesis; beta-carotene biosynthesis. Its pathway is carotenoid biosynthesis; beta-zeacarotene biosynthesis. Involved in carotenoid biosynthesis. Catalyzes the double cyclization reaction which converts lycopene to beta-carotene and neurosporene to beta-zeacarotene. Major lycopene beta-cyclase that does not seem to be involved in neoxanthin synthesis. Involved in salt tolerance improvement by increasing synthesis of carotenoids, which impairs reactive oxygen species (ROS) and protects the photosynthetic system under salt stress. The sequence is that of Lycopene beta cyclase, chloroplastic from Arabidopsis thaliana (Mouse-ear cress).